The sequence spans 274 residues: MTQPAVYVVSDSTGETAELVTRAALSQFGQTPKFIHRFHHVDSSHMIEEIVDLVAVNNGIIVHTIVLESVREELNKTAQAFGVPIIDLFGPLLNQLEETYKIKPLSEPGRVRSMDEAYFNKVAAIEFAVENDDGRNPRGILQADYVLIGISRTSKTPLSQYLALKGLKIVNIPIVPEAQIPDELFEIDPQKIIGLKISKQKLTKIRQERLISIGLPGAGTYASNQRIDEELAIFDKLASKLNCFVLDVTNKAIEETANEILIHIGEIVDENLEL.

149 to 156 (GISRTSKT) contacts ADP.

The protein belongs to the pyruvate, phosphate/water dikinase regulatory protein family. PDRP subfamily.

The enzyme catalyses N(tele)-phospho-L-histidyl/L-threonyl-[pyruvate, phosphate dikinase] + ADP = N(tele)-phospho-L-histidyl/O-phospho-L-threonyl-[pyruvate, phosphate dikinase] + AMP + H(+). It carries out the reaction N(tele)-phospho-L-histidyl/O-phospho-L-threonyl-[pyruvate, phosphate dikinase] + phosphate + H(+) = N(tele)-phospho-L-histidyl/L-threonyl-[pyruvate, phosphate dikinase] + diphosphate. Functionally, bifunctional serine/threonine kinase and phosphorylase involved in the regulation of the pyruvate, phosphate dikinase (PPDK) by catalyzing its phosphorylation/dephosphorylation. The protein is Putative pyruvate, phosphate dikinase regulatory protein 1 of Listeria welshimeri serovar 6b (strain ATCC 35897 / DSM 20650 / CCUG 15529 / CIP 8149 / NCTC 11857 / SLCC 5334 / V8).